Consider the following 59-residue polypeptide: MSKTEVRKGETIEDTLRRFKRTVSKDGTLVEARKREYYIKPGVDRRMKAKAAKTKKKKR.

Belongs to the bacterial ribosomal protein bS21 family.

The sequence is that of Small ribosomal subunit protein bS21 from Acholeplasma laidlawii (strain PG-8A).